Here is a 445-residue protein sequence, read N- to C-terminus: GTPase Der (445 aa).

EngA-type G domains follow at residues Pro-3 to Gln-167 and Ile-180 to Met-353. Residues Gly-9–Ser-16, Asp-56–Phe-60, Asn-119–Glu-122, Gly-186–Ser-193, Asp-233–Leu-237, and Asn-298–Asp-301 each bind GTP. In terms of domain architecture, KH-like spans Ala-354–Asn-438.

It belongs to the TRAFAC class TrmE-Era-EngA-EngB-Septin-like GTPase superfamily. EngA (Der) GTPase family. As to quaternary structure, associates with the 50S ribosomal subunit.

Functionally, GTPase that plays an essential role in the late steps of ribosome biogenesis. The polypeptide is GTPase Der (Burkholderia cenocepacia (strain HI2424)).